The following is a 300-amino-acid chain: Tissue factor pathway inhibitor (300 aa).

The first 24 residues, 1–24 (MKKEHIFWTSICLLLGLVPAPVSS), serve as a signal peptide directing secretion. BPTI/Kunitz inhibitor domains follow at residues 50-100 (CAMK…KEKC) and 121-171 (CFLE…KNTC). 6 disulfide bridges follow: C50–C100, C59–C83, C75–C96, C121–C171, C130–C154, and C146–C167. N141 is a glycosylation site (N-linked (GlcNAc...) asparagine). A glycan (N-linked (GlcNAc...) asparagine) is linked at N191. Residues 213 to 263 (CLPPADRGLCQANEIRFFYNAIIGKCRPFKYSGCGGNENNFTSKKACITAC) enclose the BPTI/Kunitz inhibitor 3 domain. Cystine bridges form between C213–C263, C222–C246, and C238–C259. N-linked (GlcNAc...) asparagine glycosylation occurs at N252.

It is found in the secreted. Inhibits factor X (X(a)) directly and, in a Xa-dependent way, inhibits VIIa/tissue factor activity, presumably by forming a quaternary Xa/LACI/VIIa/TF complex. It possesses an antithrombotic action and also the ability to associate with lipoproteins in plasma. The chain is Tissue factor pathway inhibitor (TFPI) from Oryctolagus cuniculus (Rabbit).